Reading from the N-terminus, the 554-residue chain is Glucose-6-phosphate isomerase (554 aa).

The active-site Proton donor is the glutamate 358. Residues histidine 389 and lysine 515 contribute to the active site. Over residues 527–540 the composition is skewed to polar residues; that stretch reads ADNSPAPQSDSSTD. A disordered region spans residues 527-554; the sequence is ADNSPAPQSDSSTDALVRRYRSERGRTS. A compositionally biased stretch (basic and acidic residues) spans 542–554; sequence LVRRYRSERGRTS.

This sequence belongs to the GPI family.

The protein localises to the cytoplasm. The catalysed reaction is alpha-D-glucose 6-phosphate = beta-D-fructose 6-phosphate. The protein operates within carbohydrate biosynthesis; gluconeogenesis. It participates in carbohydrate degradation; glycolysis; D-glyceraldehyde 3-phosphate and glycerone phosphate from D-glucose: step 2/4. Its function is as follows. Catalyzes the reversible isomerization of glucose-6-phosphate to fructose-6-phosphate. This chain is Glucose-6-phosphate isomerase, found in Mycobacterium avium (strain 104).